Here is a 413-residue protein sequence, read N- to C-terminus: BEN domain-containing protein 7 (413 aa).

Residues lysine 16, lysine 56, and lysine 85 each participate in a glycyl lysine isopeptide (Lys-Gly) (interchain with G-Cter in SUMO2) cross-link. Basic and acidic residues predominate over residues 78–88; that stretch reads GKEGEKLKEEP. Disordered regions lie at residues 78 to 153 and 208 to 243; these read GKEG…GELP and RTAVSRKRNKKKKVPPKTVEPLTVKQKPSGSEMEKK. Polar residues-rich tracts occupy residues 99-111 and 121-153; these read LNSSAEAPQSLHP and PPQSGQFSGQYGTRSRTFQSQPHPTTSSNGELP. The span at 211–222 shows a compositional bias: basic residues; the sequence is VSRKRNKKKKVP. Low complexity predominate over residues 223-232; the sequence is PKTVEPLTVK. Lysine 243 is covalently cross-linked (Glycyl lysine isopeptide (Lys-Gly) (interchain with G-Cter in SUMO2)). In terms of domain architecture, BEN spans 287-392; sequence GFDVFMPKSQ…IKLARRRLKR (106 aa). Threonine 324 carries the post-translational modification Phosphothreonine. Serine 328 is subject to Phosphoserine.

This is BEN domain-containing protein 7 (BEND7) from Homo sapiens (Human).